Reading from the N-terminus, the 232-residue chain is Fibrillarin-like rRNA/tRNA 2'-O-methyltransferase (232 aa).

Residues 87–88, 105–106, 130–131, and 150–153 each bind S-adenosyl-L-methionine; these read TT, EF, DA, and DVAQ.

It belongs to the methyltransferase superfamily. Fibrillarin family. In terms of assembly, interacts with nop5. Component of box C/D small ribonucleoprotein (sRNP) particles that contain rpl7ae, FlpA and nop5, plus a guide RNA.

In terms of biological role, involved in pre-rRNA and tRNA processing. Utilizes the methyl donor S-adenosyl-L-methionine to catalyze the site-specific 2'-hydroxyl methylation of ribose moieties in rRNA and tRNA. Site specificity is provided by a guide RNA that base pairs with the substrate. Methylation occurs at a characteristic distance from the sequence involved in base pairing with the guide RNA. The protein is Fibrillarin-like rRNA/tRNA 2'-O-methyltransferase of Methanococcus maripaludis (strain C7 / ATCC BAA-1331).